A 163-amino-acid polypeptide reads, in one-letter code: uncharacterized protein (163 aa).

In terms of tissue distribution, expressed in keratinocytes.

This is an uncharacterized protein from Homo sapiens (Human).